A 483-amino-acid chain; its full sequence is Altronate oxidoreductase (483 aa).

18-29 (IIQFGEGNFLRA) provides a ligand contact to NAD(+).

Belongs to the mannitol dehydrogenase family. UxaB subfamily.

It carries out the reaction D-altronate + NAD(+) = keto-D-tagaturonate + NADH + H(+). It functions in the pathway carbohydrate metabolism; pentose and glucuronate interconversion. In Yersinia pestis, this protein is Altronate oxidoreductase.